A 68-amino-acid polypeptide reads, in one-letter code: Peptide Hp1090 (68 aa).

The signal sequence occupies residues 1–23 (MKTQFAIFLITLVLFQMFSQSDA). F36 bears the Phenylalanine amide mark. Positions 40-68 (GLSDLDDLDESFDGEVSQADIDFLKELMQ) are excised as a propeptide.

This sequence belongs to the non-disulfide-bridged peptide (NDBP) superfamily. Short antimicrobial peptide (group 4) family. In terms of tissue distribution, expressed by the venom gland.

Its subcellular location is the secreted. It localises to the target cell membrane. Functionally, amphipathic peptide which inhibits the growth of Gram-positive bacteria. This chain is Peptide Hp1090, found in Heterometrus petersii (Asian forest scorpion).